A 108-amino-acid chain; its full sequence is Large ribosomal subunit protein uL24 (108 aa).

It belongs to the universal ribosomal protein uL24 family. In terms of assembly, part of the 50S ribosomal subunit.

In terms of biological role, one of two assembly initiator proteins, it binds directly to the 5'-end of the 23S rRNA, where it nucleates assembly of the 50S subunit. One of the proteins that surrounds the polypeptide exit tunnel on the outside of the subunit. The protein is Large ribosomal subunit protein uL24 of Salinispora tropica (strain ATCC BAA-916 / DSM 44818 / JCM 13857 / NBRC 105044 / CNB-440).